The primary structure comprises 266 residues: uncharacterized protein (266 aa).

Positions Met-1 to Gly-22 are cleaved as a signal peptide. Cys-23 carries N-palmitoyl cysteine lipidation. Cys-23 is lipidated: S-diacylglycerol cysteine.

It belongs to the staphylococcal tandem lipoprotein family.

The protein resides in the cell membrane. This is an uncharacterized protein from Staphylococcus aureus (strain USA300).